The chain runs to 385 residues: 1-deoxy-D-xylulose 5-phosphate reductoisomerase (385 aa).

T11, G12, S13, I14, A37, R38, N39, and N123 together coordinate NADPH. Residue K124 coordinates 1-deoxy-D-xylulose 5-phosphate. Position 125 (E125) interacts with NADPH. A Mn(2+)-binding site is contributed by D149. Residues S150, E151, S173, and H196 each coordinate 1-deoxy-D-xylulose 5-phosphate. E151 contacts Mn(2+). G202 is a binding site for NADPH. 4 residues coordinate 1-deoxy-D-xylulose 5-phosphate: S209, N214, K215, and E218. Mn(2+) is bound at residue E218.

Belongs to the DXR family. Requires Mg(2+) as cofactor. Mn(2+) serves as cofactor.

The catalysed reaction is 2-C-methyl-D-erythritol 4-phosphate + NADP(+) = 1-deoxy-D-xylulose 5-phosphate + NADPH + H(+). It functions in the pathway isoprenoid biosynthesis; isopentenyl diphosphate biosynthesis via DXP pathway; isopentenyl diphosphate from 1-deoxy-D-xylulose 5-phosphate: step 1/6. Catalyzes the NADPH-dependent rearrangement and reduction of 1-deoxy-D-xylulose-5-phosphate (DXP) to 2-C-methyl-D-erythritol 4-phosphate (MEP). The chain is 1-deoxy-D-xylulose 5-phosphate reductoisomerase from Moorella thermoacetica (strain ATCC 39073 / JCM 9320).